Consider the following 365-residue polypeptide: Caffeic acid 3-O-methyltransferase 1 (365 aa).

130-136 (MNQDKVL) serves as a coordination point for substrate. The segment at 162–180 (AFEYHGTDPRFNKVFNKGM) is substrate binding. S-adenosyl-L-methionine contacts are provided by Gly208, Asp231, Asp251, Met252, and Lys265. His269 serves as the catalytic Proton acceptor.

Belongs to the class I-like SAM-binding methyltransferase superfamily. Cation-independent O-methyltransferase family. COMT subfamily. Homodimer.

It catalyses the reaction (E)-caffeate + S-adenosyl-L-methionine = (E)-ferulate + S-adenosyl-L-homocysteine + H(+). Its pathway is aromatic compound metabolism; phenylpropanoid biosynthesis. In terms of biological role, catalyzes the conversion of caffeic acid to ferulic acid and of 5-hydroxyferulic acid to sinapic acid. The resulting products may subsequently be converted to the corresponding alcohols that are incorporated into lignins. The polypeptide is Caffeic acid 3-O-methyltransferase 1 (HOMT1) (Populus kitakamiensis (Aspen)).